Here is a 336-residue protein sequence, read N- to C-terminus: tRNA N6-adenosine threonylcarbamoyltransferase (336 aa).

Fe cation is bound by residues His112 and His116. Residues 136–140, Asp169, Gly182, and Asn276 contribute to the substrate site; that span reads LVSGG. Asp304 serves as a coordination point for Fe cation.

Belongs to the KAE1 / TsaD family. Fe(2+) serves as cofactor.

The protein localises to the cytoplasm. The catalysed reaction is L-threonylcarbamoyladenylate + adenosine(37) in tRNA = N(6)-L-threonylcarbamoyladenosine(37) in tRNA + AMP + H(+). Required for the formation of a threonylcarbamoyl group on adenosine at position 37 (t(6)A37) in tRNAs that read codons beginning with adenine. Is involved in the transfer of the threonylcarbamoyl moiety of threonylcarbamoyl-AMP (TC-AMP) to the N6 group of A37, together with TsaE and TsaB. TsaD likely plays a direct catalytic role in this reaction. The polypeptide is tRNA N6-adenosine threonylcarbamoyltransferase (Francisella philomiragia subsp. philomiragia (strain ATCC 25017 / CCUG 19701 / FSC 153 / O#319-036)).